Reading from the N-terminus, the 386-residue chain is S-adenosylmethionine synthase (386 aa).

Histidine 16 serves as a coordination point for ATP. Aspartate 18 is a binding site for Mg(2+). Glutamate 44 is a binding site for K(+). L-methionine contacts are provided by glutamate 57 and glutamine 100. Positions 100-110 (QSPDINVGVDQ) are flexible loop. ATP contacts are provided by residues 164–166 (DGK), 231–232 (RF), aspartate 240, 246–247 (RK), alanine 263, and lysine 267. Position 240 (aspartate 240) interacts with L-methionine. Lysine 271 serves as a coordination point for L-methionine.

It belongs to the AdoMet synthase family. Homotetramer; dimer of dimers. Mg(2+) is required as a cofactor. The cofactor is K(+).

It is found in the cytoplasm. The enzyme catalyses L-methionine + ATP + H2O = S-adenosyl-L-methionine + phosphate + diphosphate. Its pathway is amino-acid biosynthesis; S-adenosyl-L-methionine biosynthesis; S-adenosyl-L-methionine from L-methionine: step 1/1. In terms of biological role, catalyzes the formation of S-adenosylmethionine (AdoMet) from methionine and ATP. The overall synthetic reaction is composed of two sequential steps, AdoMet formation and the subsequent tripolyphosphate hydrolysis which occurs prior to release of AdoMet from the enzyme. This Sulfurovum sp. (strain NBC37-1) protein is S-adenosylmethionine synthase.